Here is a 635-residue protein sequence, read N- to C-terminus: MEWDSDSEGSGDEEEEEEEEEEEGVEVGGGGDGGVGVGVGGGFALAIEGVLGACGLVVSDALEPDFPIIYVNRGFEDATGYRAEEVLGRNCRFLQCRGPFAKRRHPLVDTTVVTDIRRCLEEGTVFQGDLLNFRKDGSPFMAKLQLTPIYGDDETITHYMGMQFFNDSNVDLGPLSVSTTKEIVRSTLITPDNTIRPSPMGKGFCSEHSDLFLLSDEVLCQKILSRLSPRDIASVNSVCKRLYHLTRNDDLWRMVCQNAWGSEATQVLETVAGTRSLAWGRLARELTTLEAVTWRKLTVGGAVEPSRCNFSACAAGNRVVLFGGEGVNMQPMNDTFVLDLNASKPEWRHINVRSAPPGRWGHTLSCLNGSRLVLFGGCGRQGLLNDVFMLDLDAQQPTWREIPGLAPPVPRSWHSSCTLDGTKLVVSGGCADSGVLLSDTYLLDVTMERPVWREIPASWTPPCRLGHSLSVYDGRKILMFGGLAKSGPLRLRSNDVFTLDLSENKPCWRCITGSGMPGASNPAGVGPPPRLDHVAVSLPGGRILIFGGSVAGLHSASKLYLLDPTEEKPTWRILNVPGRPPRFAWGHSTCVVGGTKAIVLGGQTGEEWTLTELHELSLMFPTLNQKDLELYSWKL.

Acidic residues predominate over residues 1–25 (MEWDSDSEGSGDEEEEEEEEEEEGV). Residues 1–32 (MEWDSDSEGSGDEEEEEEEEEEEGVEVGGGGD) form a disordered region. One can recognise a PAS domain in the interval 44 to 123 (ALAIEGVLGA…TDIRRCLEEG (80 aa)). S-4a-FMN cysteine is present on cysteine 91. Residues 209-255 (SDLFLLSDEVLCQKILSRLSPRDIASVNSVCKRLYHLTRNDDLWRMV) enclose the F-box domain. Kelch repeat units lie at residues 371–421 (RLVL…TLDG), 423–474 (KLVV…VYDG), 476–530 (KILM…PPPR), and 542–594 (RILI…VVGG).

This sequence belongs to the ADAGIO family. In terms of processing, FMN binds covalently to cysteine after exposure to blue light and is reversed in the dark.

Its subcellular location is the nucleus. Its pathway is protein modification; protein ubiquitination. In terms of biological role, component of an E3 ubiquitin ligase complex that plays a central role in blue light-dependent circadian cycles. Acts as a blue light photoreceptor, due to the presence of FMN, that mediates light-regulated protein degradation of critical clock components by targeting them to the proteasome complex. The protein is Putative adagio-like protein 2 of Oryza sativa subsp. japonica (Rice).